The sequence spans 66 residues: U1-theraphotoxin-Cg1b (66 aa).

Residues 1 to 21 (MKTSALFVIFGLVLLFCNSFA) form the signal peptide. Residues 22 to 29 (AELKTTGR) constitute a propeptide that is removed on maturation. Disulfide bonds link Cys31/Cys46, Cys38/Cys51, and Cys45/Cys58.

It belongs to the neurotoxin 10 (Hwtx-1) family. 46 (Jztx-7/10/12) subfamily. As to expression, expressed by the venom gland.

Its subcellular location is the secreted. In terms of biological role, probable ion channel inhibitor. This Chilobrachys guangxiensis (Chinese earth tiger tarantula) protein is U1-theraphotoxin-Cg1b.